The sequence spans 501 residues: Glycerol kinase (501 aa).

Thr-14 serves as a coordination point for ADP. Residues Thr-14, Thr-15, and Ser-16 each contribute to the ATP site. Thr-14 serves as a coordination point for sn-glycerol 3-phosphate. Arg-18 is a binding site for ADP. Residues Arg-84, Glu-85, Tyr-136, and Asp-246 each coordinate sn-glycerol 3-phosphate. Residues Arg-84, Glu-85, Tyr-136, Asp-246, and Gln-247 each contribute to the glycerol site. ADP contacts are provided by Thr-268 and Gly-311. Residues Thr-268, Gly-311, Gln-315, and Gly-412 each contribute to the ATP site. The ADP site is built by Gly-412 and Asn-416.

The protein belongs to the FGGY kinase family. In terms of assembly, homotetramer and homodimer (in equilibrium).

The catalysed reaction is glycerol + ATP = sn-glycerol 3-phosphate + ADP + H(+). The protein operates within polyol metabolism; glycerol degradation via glycerol kinase pathway; sn-glycerol 3-phosphate from glycerol: step 1/1. Activated by phosphorylation and inhibited by fructose 1,6-bisphosphate (FBP). In terms of biological role, key enzyme in the regulation of glycerol uptake and metabolism. Catalyzes the phosphorylation of glycerol to yield sn-glycerol 3-phosphate. This Desulforamulus reducens (strain ATCC BAA-1160 / DSM 100696 / MI-1) (Desulfotomaculum reducens) protein is Glycerol kinase.